The following is a 611-amino-acid chain: Inhibitor of apoptosis protein (611 aa).

BIR repeat units lie at residues E30–V97, E176–V242, and H262–L329. Zn(2+) is bound by residues C299, C302, H319, and C326. The CARD domain maps to V446–K536. An RING-type zinc finger spans residues C564–R599.

This sequence belongs to the IAP family. Cells of the T-lymphocyte lineage. Found in both cortical and medullary cells of the thymus. Expressed at relatively high levels also in spleen, bursa, intestine and lung and at very low levels in testis, brain and skeletal muscle.

It is found in the nucleus. It localises to the cytoplasm. Apoptotic suppressor. The protein is Inhibitor of apoptosis protein (ITA) of Gallus gallus (Chicken).